Here is a 440-residue protein sequence, read N- to C-terminus: Tumor necrosis factor receptor superfamily member 10B (440 aa).

2 disordered regions span residues 1–32 and 60–84; these read MEQR…RPGP and DLAP…CPPG. The signal sequence occupies residues 1–55; sequence MEQRGQNAPAASGARKRHGPGPREARGARPGPRVPKTLVLVVAAVLLLVSAESAL. The Extracellular portion of the chain corresponds to 56-210; sequence ITQQDLAPQQ…SPGTPASPCS (155 aa). 3 TNFR-Cys repeats span residues 57–94, 97–137, and 138–178; these read TQQD…GRDC, CKYG…NTVC, and QCEE…DIEC. Residues 60-71 are compositionally biased toward low complexity; the sequence is DLAPQQRAAPQQ. Intrachain disulfides connect C81-C94, C97-C113, C116-C129, C119-C137, C139-C153, C156-C170, and C160-C178. Residues 192–206 form a TAPE repeat; sequence PAVEETVTSSPGTPA. Residues 211–231 traverse the membrane as a helical segment; it reads LSGIIIGVTVAAVVLIVAVFV. Topologically, residues 232–440 are cytoplasmic; that stretch reads CKSLLWKKVL…LEGNADSAMS (209 aa). In terms of domain architecture, Death spans 339 to 422; it reads RQCFDDFADL…LAKQKIEDHL (84 aa).

As to quaternary structure, monomer. Can interact with TRADD and RIPK1. Interacts with HCMV protein UL141; this interaction prevents TNFRSF10B cell surface expression. Two TNFRSF10B monomers interact with a UL141 homodimer. Three TNFRSF10B molecules interact with TNFSF10 homotrimer. In the absence of stimulation, interacts with BIRC2, DDX3X and GSK3B. The interaction with BIRC2 and DDX3X is further enhanced upon receptor stimulation and accompanied by DDX3X and BIRC2 cleavage. In terms of processing, (Microbial infection) Glycosylated on Arg residue by S.typhimurium protein Ssek3. As to expression, widely expressed in adult and fetal tissues; very highly expressed in tumor cell lines such as HeLaS3, K-562, HL-60, SW480, A-549 and G-361; highly expressed in heart, peripheral blood lymphocytes, liver, pancreas, spleen, thymus, prostate, ovary, uterus, placenta, testis, esophagus, stomach and throughout the intestinal tract; not detectable in brain.

The protein resides in the membrane. Its function is as follows. Receptor for the cytotoxic ligand TNFSF10/TRAIL. The adapter molecule FADD recruits caspase-8 to the activated receptor. The resulting death-inducing signaling complex (DISC) performs caspase-8 proteolytic activation which initiates the subsequent cascade of caspases (aspartate-specific cysteine proteases) mediating apoptosis. Promotes the activation of NF-kappa-B. Essential for ER stress-induced apoptosis. This chain is Tumor necrosis factor receptor superfamily member 10B (TNFRSF10B), found in Homo sapiens (Human).